Reading from the N-terminus, the 72-residue chain is Translation initiation factor IF-1 (72 aa).

One can recognise an S1-like domain in the interval 1–72 (MAKEKDTIRT…PTRGRIVYRK (72 aa)).

Belongs to the IF-1 family. As to quaternary structure, component of the 30S ribosomal translation pre-initiation complex which assembles on the 30S ribosome in the order IF-2 and IF-3, IF-1 and N-formylmethionyl-tRNA(fMet); mRNA recruitment can occur at any time during PIC assembly.

Its subcellular location is the cytoplasm. In terms of biological role, one of the essential components for the initiation of protein synthesis. Stabilizes the binding of IF-2 and IF-3 on the 30S subunit to which N-formylmethionyl-tRNA(fMet) subsequently binds. Helps modulate mRNA selection, yielding the 30S pre-initiation complex (PIC). Upon addition of the 50S ribosomal subunit IF-1, IF-2 and IF-3 are released leaving the mature 70S translation initiation complex. This Thermus thermophilus (strain ATCC BAA-163 / DSM 7039 / HB27) protein is Translation initiation factor IF-1.